We begin with the raw amino-acid sequence, 249 residues long: Ubiquinone biosynthesis O-methyltransferase (249 aa).

S-adenosyl-L-methionine-binding residues include Arg41, Gly72, Asp93, and Met136.

Belongs to the methyltransferase superfamily. UbiG/COQ3 family.

The catalysed reaction is a 3-demethylubiquinol + S-adenosyl-L-methionine = a ubiquinol + S-adenosyl-L-homocysteine + H(+). It catalyses the reaction a 3-(all-trans-polyprenyl)benzene-1,2-diol + S-adenosyl-L-methionine = a 2-methoxy-6-(all-trans-polyprenyl)phenol + S-adenosyl-L-homocysteine + H(+). It participates in cofactor biosynthesis; ubiquinone biosynthesis. In terms of biological role, O-methyltransferase that catalyzes the 2 O-methylation steps in the ubiquinone biosynthetic pathway. This Mesorhizobium japonicum (strain LMG 29417 / CECT 9101 / MAFF 303099) (Mesorhizobium loti (strain MAFF 303099)) protein is Ubiquinone biosynthesis O-methyltransferase.